We begin with the raw amino-acid sequence, 240 residues long: UDP-2,3-diacylglucosamine hydrolase (240 aa).

Asp-8, His-10, Asp-41, Asn-79, and His-114 together coordinate Mn(2+). 79 to 80 (NR) is a substrate binding site. Substrate is bound by residues Asp-122, Ser-160, Asn-164, Lys-167, and His-195. Residues His-195 and His-197 each contribute to the Mn(2+) site.

It belongs to the LpxH family. Mn(2+) is required as a cofactor.

Its subcellular location is the cell inner membrane. It catalyses the reaction UDP-2-N,3-O-bis[(3R)-3-hydroxytetradecanoyl]-alpha-D-glucosamine + H2O = 2-N,3-O-bis[(3R)-3-hydroxytetradecanoyl]-alpha-D-glucosaminyl 1-phosphate + UMP + 2 H(+). It functions in the pathway glycolipid biosynthesis; lipid IV(A) biosynthesis; lipid IV(A) from (3R)-3-hydroxytetradecanoyl-[acyl-carrier-protein] and UDP-N-acetyl-alpha-D-glucosamine: step 4/6. Hydrolyzes the pyrophosphate bond of UDP-2,3-diacylglucosamine to yield 2,3-diacylglucosamine 1-phosphate (lipid X) and UMP by catalyzing the attack of water at the alpha-P atom. Involved in the biosynthesis of lipid A, a phosphorylated glycolipid that anchors the lipopolysaccharide to the outer membrane of the cell. This chain is UDP-2,3-diacylglucosamine hydrolase, found in Escherichia coli O17:K52:H18 (strain UMN026 / ExPEC).